We begin with the raw amino-acid sequence, 478 residues long: Deoxyribodipyrimidine photo-lyase (478 aa).

Positions 2–136 (NVNLMWFRND…IINCFHDSVL (135 aa)) constitute a Photolyase/cryptochrome alpha/beta domain. A (6R)-5,10-methylene-5,6,7,8-tetrahydrofolate-binding site is contributed by glutamate 110. FAD is bound by residues tyrosine 227 and 239–243 (TSMLS). 2 interaction with DNA regions span residues 279–286 (ELLWREFY) and 346–347 (NR). 377-379 (DGD) contributes to the FAD binding site. Glutamine 409 is a binding site for DNA.

Belongs to the DNA photolyase class-1 family. Monomer. FAD serves as cofactor. (6R)-5,10-methylene-5,6,7,8-tetrahydrofolate is required as a cofactor.

It carries out the reaction cyclobutadipyrimidine (in DNA) = 2 pyrimidine residues (in DNA).. Involved in repair of UV radiation-induced DNA damage. Catalyzes the light-dependent monomerization (300-600 nm) of cyclobutyl pyrimidine dimers (in cis-syn configuration), which are formed between adjacent bases on the same DNA strand upon exposure to ultraviolet radiation. In Buchnera aphidicola subsp. Baizongia pistaciae (strain Bp), this protein is Deoxyribodipyrimidine photo-lyase (phrB).